A 1589-amino-acid polypeptide reads, in one-letter code: Paternally-expressed gene 3 protein (1589 aa).

An SCAN box domain is found at 46 to 128 (HQRFRNLIYV…TLLENYKEMY (83 aa)). 3 disordered regions span residues 128–230 (YQPE…ESYQ), 266–306 (DGHS…RRGI), and 319–349 (KFIK…MSDD). Over residues 129–142 (QPEDDNNSDVTSDD) the composition is skewed to acidic residues. Basic and acidic residues-rich tracts occupy residues 143–152 (DMTRNRRESS), 161–182 (SGDR…DRWS), 206–225 (FEMD…RSQD), and 295–306 (PEAKKSTHRRGI). C2H2-type zinc fingers lie at residues 454-476 (YVCD…QIMH), 507-529 (FECK…RKIH), and 565-587 (YECR…QKIH). Positions 588–607 (FGDDKDNEREHERERERGET) are enriched in basic and acidic residues. The disordered stretch occupies residues 588 to 610 (FGDDKDNEREHERERERGETFRP). The C2H2-type 4 zinc-finger motif lies at 627–649 (YECKVCGETFLHSSSLKEHQKIH). A disordered region spans residues 838–930 (LVASKPPRSH…EFSVPSSNVR (93 aa)). Residues 868–881 (LNDKRQKIPARENP) are compositionally biased toward basic and acidic residues. Residues 969–991 (YECQECGECFAHSSDLTEHQKIH) form a C2H2-type 5 zinc finger. Positions 1056 to 1104 (EKSHGEESQGENTDGEETHSEETHGQETIEDPVIQSSDMEDPQKDDPDD) are disordered. The span at 1071–1082 (EETHSEETHGQE) shows a compositional bias: basic and acidic residues. 5 C2H2-type zinc fingers span residues 1107–1129 (YECE…QKVH), 1163–1185 (YECP…QRIH), 1225–1247 (IRCL…MRLH), 1282–1304 (FECA…VTVH), and 1332–1354 (YECK…KELH). A compositionally biased stretch (acidic residues) spans 1396-1416 (AEPEVEAAEPEVEAAEPEVEA). The disordered stretch occupies residues 1396–1496 (AEPEVEAAEP…GIEDPEEGED (101 aa)). 7 tandem repeats follow at residues 1398-1404 (PEVEAAE), 1405-1411 (PEVEAAE), 1412-1418 (PEVEAAE), 1419-1423 (PNGEA), 1426-1430 (PDGEA), 1433-1437 (PIGEA), and 1440-1444 (PNGEA). The interval 1398 to 1418 (PEVEAAEPEVEAAEPEVEAAE) is 3 X 7 AA repeat of P-E-V-E-A-A-E. The tract at residues 1419-1444 (PNGEAEGPDGEAAEPIGEAGQPNGEA) is 4 X 5 AA repeat of P-X-G-E-A. Acidic residues-rich tracts occupy residues 1450–1467 (DADE…ERAE) and 1476–1496 (PEGD…EGED). 2 consecutive C2H2-type zinc fingers follow at residues 1506-1528 (YDCH…LKTH) and 1565-1587 (FKCD…QNTH).

The protein belongs to the krueppel C2H2-type zinc-finger protein family. In terms of assembly, homodimer. Interacts with SIAH1A and SIAH2. Interacts with TRAF2.

The protein localises to the nucleus. Its subcellular location is the cytoplasm. In terms of biological role, induces apoptosis in cooperation with SIAH1A. Acts as a mediator between p53/TP53 and BAX in a neuronal death pathway that is activated by DNA damage. Acts synergistically with TRAF2 and inhibits TNF induced apoptosis through activation of NF-kappa-B. The chain is Paternally-expressed gene 3 protein (PEG3) from Gorilla gorilla gorilla (Western lowland gorilla).